We begin with the raw amino-acid sequence, 137 residues long: Ribosome-binding factor A (137 aa).

The interval 112 to 137 (KKDEVKEDESHEDESTDHTEETNEEP) is disordered. A compositionally biased stretch (basic and acidic residues) spans 127-137 (TDHTEETNEEP).

The protein belongs to the RbfA family. As to quaternary structure, monomer. Binds 30S ribosomal subunits, but not 50S ribosomal subunits or 70S ribosomes.

It localises to the cytoplasm. Functionally, one of several proteins that assist in the late maturation steps of the functional core of the 30S ribosomal subunit. Associates with free 30S ribosomal subunits (but not with 30S subunits that are part of 70S ribosomes or polysomes). Required for efficient processing of 16S rRNA. May interact with the 5'-terminal helix region of 16S rRNA. This Coprothermobacter proteolyticus (strain ATCC 35245 / DSM 5265 / OCM 4 / BT) protein is Ribosome-binding factor A.